A 256-amino-acid chain; its full sequence is Small ribosomal subunit protein eS1B (256 aa).

The residue at position 2 (Ala2) is an N-acetylalanine; partial.

The protein belongs to the eukaryotic ribosomal protein eS1 family. In terms of assembly, component of the small ribosomal subunit. Mature ribosomes consist of a small (40S) and a large (60S) subunit. The 40S subunit contains about 33 different proteins and 1 molecule of RNA (18S). The 60S subunit contains about 49 different proteins and 3 molecules of RNA (25S, 5.8S and 5S).

The protein resides in the cytoplasm. This Scheffersomyces stipitis (strain ATCC 58785 / CBS 6054 / NBRC 10063 / NRRL Y-11545) (Yeast) protein is Small ribosomal subunit protein eS1B.